Reading from the N-terminus, the 468-residue chain is Serine/threonine-protein kinase ULK3 (468 aa).

The 257-residue stretch at phenylalanine 13–valine 269 folds into the Protein kinase domain. Residues leucine 19 to valine 27 and lysine 43 each bind ATP. Aspartate 136 (proton acceptor) is an active-site residue. MIT domains follow at residues threonine 279 to valine 347 and arginine 374 to methionine 442.

Belongs to the protein kinase superfamily. Ser/Thr protein kinase family. APG1/unc-51/ULK1 subfamily.

Its subcellular location is the cytoplasm. It catalyses the reaction L-seryl-[protein] + ATP = O-phospho-L-seryl-[protein] + ADP + H(+). The enzyme catalyses L-threonyl-[protein] + ATP = O-phospho-L-threonyl-[protein] + ADP + H(+). Its function is as follows. Serine/threonine protein kinase that acts as a regulator of Sonic hedgehog (SHH) signaling and autophagy. The chain is Serine/threonine-protein kinase ULK3 (ulk3) from Xenopus laevis (African clawed frog).